Here is a 556-residue protein sequence, read N- to C-terminus: PPE family protein PPE2 (556 aa).

The interval 8–164 is PPE; the sequence is ASPPEVHSAL…ASYQAVSTAA (157 aa). An SH3-like region spans residues 201 to 256; that stretch reads QKIGYTDFYNNVIQPFINWLTNLPFLQAMFSGFDPWLPSLGNPLTFLSPANIAFAL. The leucine zipper motif stretch occupies residues 319–340; that stretch reads LEQTLALLPAALPLLAAPLAPL. Disordered regions lie at residues 385–418 and 443–556; these read TPTP…PPVT and GTGV…TRVE. Residues 400–417 are compositionally biased toward pro residues; the sequence is PTPPLGPPPPPVTAPPPV. A compositionally biased stretch (low complexity) spans 456-471; sequence AEAPASAAAPEEQVQP. Over residues 472 to 481 the composition is skewed to basic residues; sequence QRRRRPKIKQ. A Nuclear localization signal motif is present at residues 473-481; it reads RRRRPKIKQ.

Belongs to the mycobacterial PPE family.

The protein resides in the secreted. It is found in the host cytoplasm. The protein localises to the host nucleus. Functionally, inhibits nitric oxide (NO) production in activated macrophages. Acts by inhibiting expression of the host inducible nitric oxide synthase (iNOS). PPE2 is translocated into the host macrophage nucleus, where it interacts with a GATA-binding site overlapping with the TATA box of NOS2 (iNOS) promoter, and strongly inhibits NOS2 gene transcription. Reduction in NO production in turn facilitates intracellular survival of the bacilli inside the macrophage. In addition, disrupts the assembly of NADPH oxidase complex, which inhibits NADPH oxidase-mediated reactive oxygen species (ROS) generation in macrophages and favors M.tuberculosis survival. Acts by interacting with NCF2, the cytosolic subunit of NADPH oxidase, and preventing translocation of NCF2 and NCF1 to the membrane, which causes a reduction of the functional assembly of NADPH oxidase complex and a decrease in NADPH oxidase activity. The sequence is that of PPE family protein PPE2 (PPE2) from Mycobacterium tuberculosis (strain CDC 1551 / Oshkosh).